The following is a 125-amino-acid chain: Cystatin-like cysteine protease inhibitor EPIC2B (125 aa).

Positions Met-1–Gly-21 are cleaved as a signal peptide. N-linked (GlcNAc...) asparagine glycosylation occurs at Asn-45. Residues Gln-68 to Gly-72 carry the Secondary area of contact motif.

The protein belongs to the cystatin family. As to quaternary structure, interacts with the host papain-like cysteine protease PIP1. Interacts with the host papain-like cysteine protease RCR3. Interacts with the host papain-like cysteine protease C14.

The protein resides in the secreted. Functionally, secreted effector that interacts with and inhibits the pathogenesis-related papain-like cysteine proteases C14, PIP1 and RCR3 of host plants. Inhibition of host proteases by a pathogen extracellular protease inhibitor forms a specific type of defense-counterdefense mechanism between plants and microbial pathogens. This is Cystatin-like cysteine protease inhibitor EPIC2B from Phytophthora infestans (Potato late blight agent).